A 267-amino-acid chain; its full sequence is Putative ankyrin repeat protein RF_1099 (267 aa).

4 ANK repeats span residues 46–75 (DPIT…GVNQ), 78–107 (LGWV…SMSL), 136–165 (DGIT…NPNV), and 170–199 (TGMT…DPNI). A coiled-coil region spans residues 238–265 (KQKIIKERNSIKTRNKEKEKEIKKLFNS).

In Rickettsia felis (strain ATCC VR-1525 / URRWXCal2) (Rickettsia azadi), this protein is Putative ankyrin repeat protein RF_1099.